A 284-amino-acid polypeptide reads, in one-letter code: Tropomyosin (284 aa).

Residues 1 to 38 are disordered; it reads MEAIKKKMQAMKLEKDNAVDRAETAEQQSREAALRAEK. Residues 1–284 are a coiled coil; the sequence is MEAIKKKMQA…DQTFSELTGY (284 aa). Positions 12 to 38 are enriched in basic and acidic residues; sequence KLEKDNAVDRAETAEQQSREAALRAEK.

This sequence belongs to the tropomyosin family. Homodimer.

Functionally, tropomyosin, in association with the troponin complex, plays a central role in the calcium dependent regulation of muscle contraction. The protein is Tropomyosin of Rhipicephalus microplus (Cattle tick).